Here is a 176-residue protein sequence, read N- to C-terminus: RNA 2',3'-cyclic phosphodiesterase (176 aa).

Residue His-28 is the Proton donor of the active site. 2 short sequence motifs (HXTX) span residues 28-31 (HITL) and 113-116 (HVTL). The Proton acceptor role is filled by His-113.

Belongs to the 2H phosphoesterase superfamily. ThpR family.

The enzyme catalyses a 3'-end 2',3'-cyclophospho-ribonucleotide-RNA + H2O = a 3'-end 2'-phospho-ribonucleotide-RNA + H(+). Its function is as follows. Hydrolyzes RNA 2',3'-cyclic phosphodiester to an RNA 2'-phosphomonoester. This Aeropyrum pernix (strain ATCC 700893 / DSM 11879 / JCM 9820 / NBRC 100138 / K1) protein is RNA 2',3'-cyclic phosphodiesterase.